A 76-amino-acid chain; its full sequence is MRLIKAFLVQLLLLPIFFYKRFISPLTPPSCRFTPSCSSYAIEALRKYGPGKGLLLSIKRILRCHPWGGSGYDPVP.

It belongs to the UPF0161 family.

It localises to the cell inner membrane. In terms of biological role, could be involved in insertion of integral membrane proteins into the membrane. This chain is Putative membrane protein insertion efficiency factor, found in Porphyromonas gingivalis (strain ATCC 33277 / DSM 20709 / CIP 103683 / JCM 12257 / NCTC 11834 / 2561).